The following is a 677-amino-acid chain: Levanase (677 aa).

Residues 1-24 form the signal peptide; it reads MKKRLIQVMIMFTLLLTMAFSADA. Substrate-binding positions include 46 to 49, Q65, W73, 105 to 106, 171 to 172, E223, and W313; these read WMND, FS, and RD. D49 is a catalytic residue.

Belongs to the glycosyl hydrolase 32 family.

The protein localises to the secreted. The catalysed reaction is Hydrolysis of terminal, non-reducing (2-&gt;1)- and (2-&gt;6)-linked beta-D-fructofuranose residues in fructans.. Its activity is regulated as follows. Is completely inhibited by Ag(+) and Hg(2+) ions. Functionally, exo-fructosidase that can hydrolyze both levan and inulin, leading to the production of free fructose. Is also able to hydrolyze sucrose and to a small extent raffinose, but not melezitose, stachylose, cellobiose, maltose, and lactose. This is Levanase (sacC) from Bacillus subtilis (strain 168).